A 381-amino-acid chain; its full sequence is Alkanesulfonate monooxygenase (381 aa).

The protein belongs to the SsuD family. Homotetramer.

It carries out the reaction an alkanesulfonate + FMNH2 + O2 = an aldehyde + FMN + sulfite + H2O + 2 H(+). Functionally, catalyzes the desulfonation of aliphatic sulfonates. This Escherichia coli O127:H6 (strain E2348/69 / EPEC) protein is Alkanesulfonate monooxygenase.